The following is a 336-amino-acid chain: Immune-associated nucleotide-binding protein 13 (336 aa).

Positions 15 to 221 (KPERTLVLLG…YMADLSHELR (207 aa)) constitute an AIG1-type G domain. Residues 24 to 31 (GRTGNGKS) form a G1 region. Residues 24-32 (GRTGNGKSA) and Ser45 contribute to the GTP site. Residues 51–55 (FITKE) form a G2 region. Positions 73-76 (DTPG) are G3. The segment at 143–146 (TNED) is G4. Positions 179–181 (DNS) are G5. Asn180 is a GTP binding site. Residues 265-328 (KEKISNQLKE…EKETASLRTE (64 aa)) adopt a coiled-coil conformation.

The protein belongs to the TRAFAC class TrmE-Era-EngA-EngB-Septin-like GTPase superfamily. AIG1/Toc34/Toc159-like paraseptin GTPase family. IAN subfamily. Expressed in pollen grains.

The sequence is that of Immune-associated nucleotide-binding protein 13 from Arabidopsis thaliana (Mouse-ear cress).